We begin with the raw amino-acid sequence, 166 residues long: KH homology domain-containing protein 1C (166 aa).

The region spanning 19-78 is the KH; atypical domain; it reads PLVFDMEEDKEDYIFGPHDEYLHTLEVHSNTLIQLERWFTPTGQTRVTVVGPLKARLWVM.

This sequence belongs to the KHDC1 family.

The chain is KH homology domain-containing protein 1C (Khdc1c) from Mus musculus (Mouse).